Reading from the N-terminus, the 382-residue chain is uncharacterized protein (382 aa).

12 helical membrane passes run 14–34 (GLLL…LWLA), 45–65 (VVSS…GYVI), 79–99 (FIFA…SWLA), 102–122 (FVAG…LMCS), 131–151 (LLAA…LLVS), 157–177 (LMSV…PLLF), 204–224 (LGVN…GLMP), 235–255 (ASIG…QWPI), 270–290 (VQVF…AMAP), 291–311 (ALFI…AWAC), 325–345 (ALLL…AMLM), and 348–368 (FSDN…LLML).

The protein belongs to the major facilitator superfamily. YcaD (TC 2.A.1.26) family.

It is found in the cell inner membrane. This is an uncharacterized protein from Escherichia coli O6:K15:H31 (strain 536 / UPEC).